The chain runs to 139 residues: Translation initiation factor 2 subunit beta (139 aa).

The protein belongs to the eIF-2-beta/eIF-5 family. Heterotrimer composed of an alpha, a beta and a gamma chain.

In terms of biological role, eIF-2 functions in the early steps of protein synthesis by forming a ternary complex with GTP and initiator tRNA. The chain is Translation initiation factor 2 subunit beta from Saccharolobus solfataricus (strain ATCC 35092 / DSM 1617 / JCM 11322 / P2) (Sulfolobus solfataricus).